The primary structure comprises 122 residues: Large ribosomal subunit protein uL14 (122 aa).

Belongs to the universal ribosomal protein uL14 family. In terms of assembly, part of the 50S ribosomal subunit. Forms a cluster with proteins L3 and L19. In the 70S ribosome, L14 and L19 interact and together make contacts with the 16S rRNA in bridges B5 and B8.

Its function is as follows. Binds to 23S rRNA. Forms part of two intersubunit bridges in the 70S ribosome. This Campylobacter jejuni subsp. jejuni serotype O:6 (strain 81116 / NCTC 11828) protein is Large ribosomal subunit protein uL14.